We begin with the raw amino-acid sequence, 191 residues long: Cytochrome b-245 light chain (191 aa).

The Cytoplasmic segment spans residues 2–7; that stretch reads GQIEWA. Residues 8–30 form a helical membrane-spanning segment; the sequence is MWANEQALASGLILITGGIVATA. Residues 31–35 are Extracellular-facing; the sequence is GQFTQ. The helical transmembrane segment at 36-53 threads the bilayer; sequence WYLGAYSIAAGVLVCLLE. Over 54-69 the chain is Cytoplasmic; the sequence is YPRGKRSKGSTMERCG. The stretch at 70–80 is an intramembrane region; it reads QKYLTRVVKLF. Over 81–86 the chain is Cytoplasmic; the sequence is GPLTRN. Residues 87–104 traverse the membrane as a helical segment; sequence YYIRAFLHLGLAVPAGFL. Leu-105 is a topological domain (extracellular). The chain crosses the membrane as a helical span at residues 106–126; sequence ATILGTACLAIASGIYLLAAI. Over 127–191 the chain is Cytoplasmic; the sequence is RGEQWSPIEP…NPMPVNDEVV (65 aa). The disordered stretch occupies residues 134 to 191; that stretch reads IEPKPKERPQIGGTIKQPPSNPPPRPPAEARKKPSEEAAGVPTGGPQENPMPVNDEVV. Phosphothreonine is present on Thr-147. Lys-149 participates in a covalent cross-link: Glycyl lysine isopeptide (Lys-Gly) (interchain with G-Cter in ubiquitin). Position 168 is a phosphoserine (Ser-168).

This sequence belongs to the p22phox family. In terms of assembly, component of the phagocyte NADPH oxidase core complex/cytochrome b558 complex, composed of CYBB (heavy chain (beta)) and CYBA (light chain (alpha)). Component of the phagocyte NADPH oxidase complex composed of an obligatory core heterodimer formed by the membrane proteins CYBA and CYBB and the cytosolic regulatory subunits NCF1/p47-phox, NCF2/p67-phox, NCF4/p40-phox and the small GTPase RAC1 or RAC2. Interacts with NCF1 (via SH3 domain). Interacts with SH3PXD2A. Interacts with DUOX1, DUOX2 and TPO. Interacts with NOX4; this interaction mediates superoxide generation. Interacts with calprotectin (S100A8/9). Interacts with GBP7. Interacts with NOXO1. Forms a heterodimer with NOX3 and is essential for activity and cell membrane localization of NOX3. Interacts with NOX1. Phosphorylation at Thr-147 enhances NADPH oxidase activity by promoting NCF1/p47-phox binding. Post-translationally, ubiquitinated at Lys-149 likely by RNF145.

The protein localises to the cell membrane. Functionally, subunit of NADPH oxidase complexes that is required for the NADPH oxidase activity that generates, in various cell types, superoxide from molecular oxygen utilizing NADPH as an electron donor. Subunit of the phagocyte NADPH oxidase complex that mediates the transfer of electrons from cytosolic NADPH to O2 to produce the superoxide anion (O2(-)). In the activated complex, electrons are first transferred from NADPH to flavin adenine dinucleotide (FAD) and subsequently transferred via two heme molecules to molecular oxygen, producing superoxide through an outer-sphere reaction. Activation of the NADPH oxidase complex is initiated by the assembly of cytosolic subunits of the NADPH oxidase complex with the core NADPH oxidase complex to form a complex at the plasma membrane or phagosomal membrane. This activation process is initiated by phosphorylation dependent binding of the cytosolic NCF1/p47-phox subunit to the C-terminus of CYBA/p22-phox. Aassociates with NOX3 to form a functional NADPH oxidase constitutively generating superoxide. This Bos taurus (Bovine) protein is Cytochrome b-245 light chain.